Consider the following 154-residue polypeptide: Myoglobin (154 aa).

Residues 2–148 (GLSDEEWKKV…FRNDMASRYK (147 aa)) enclose the Globin domain. Position 65 (His65) interacts with nitrite. O2 is bound at residue His65. Position 94 (His94) interacts with heme b.

The protein belongs to the globin family. Monomeric.

It localises to the cytoplasm. The protein resides in the sarcoplasm. It carries out the reaction Fe(III)-heme b-[protein] + nitric oxide + H2O = Fe(II)-heme b-[protein] + nitrite + 2 H(+). The catalysed reaction is H2O2 + AH2 = A + 2 H2O. Its function is as follows. Monomeric heme protein which primary function is to store oxygen and facilitate its diffusion within muscle tissues. Reversibly binds oxygen through a pentacoordinated heme iron and enables its timely and efficient release as needed during periods of heightened demand. Depending on the oxidative conditions of tissues and cells, and in addition to its ability to bind oxygen, it also has a nitrite reductase activity whereby it regulates the production of bioactive nitric oxide. Under stress conditions, like hypoxia and anoxia, it also protects cells against reactive oxygen species thanks to its pseudoperoxidase activity. In Varanus varius (Lace monitor lizard), this protein is Myoglobin (MB).